The primary structure comprises 406 residues: Peptidase T (406 aa).

His80 is a binding site for Zn(2+). Asp82 is a catalytic residue. Asp141 is a Zn(2+) binding site. The active-site Proton acceptor is the Glu175. Zn(2+) is bound by residues Glu176, Asp198, and His380.

Belongs to the peptidase M20B family. Zn(2+) serves as cofactor.

It localises to the cytoplasm. It carries out the reaction Release of the N-terminal residue from a tripeptide.. Functionally, cleaves the N-terminal amino acid of tripeptides. The polypeptide is Peptidase T (Streptococcus mutans serotype c (strain ATCC 700610 / UA159)).